A 167-amino-acid chain; its full sequence is Large ribosomal subunit protein uL10 (167 aa).

It belongs to the universal ribosomal protein uL10 family. As to quaternary structure, part of the ribosomal stalk of the 50S ribosomal subunit. The N-terminus interacts with L11 and the large rRNA to form the base of the stalk. The C-terminus forms an elongated spine to which L12 dimers bind in a sequential fashion forming a multimeric L10(L12)X complex.

Its function is as follows. Forms part of the ribosomal stalk, playing a central role in the interaction of the ribosome with GTP-bound translation factors. The sequence is that of Large ribosomal subunit protein uL10 from Yersinia enterocolitica serotype O:8 / biotype 1B (strain NCTC 13174 / 8081).